A 636-amino-acid polypeptide reads, in one-letter code: Chaperone protein DnaK (636 aa).

Residues 579 to 636 are disordered; the sequence is ELYKNAAPPPGADGQQGADGQQGADGQQGADGQQGADGQQGADGQTTESSSNDETKTN. Over residues 590 to 623 the composition is skewed to low complexity; it reads ADGQQGADGQQGADGQQGADGQQGADGQQGADGQ.

This sequence belongs to the heat shock protein 70 family.

Its function is as follows. Acts as a chaperone. The sequence is that of Chaperone protein DnaK from Nitrosopumilus maritimus (strain SCM1).